A 356-amino-acid polypeptide reads, in one-letter code: Phosphate acyltransferase (356 aa).

The protein belongs to the PlsX family. Homodimer. Probably interacts with PlsY.

It localises to the cytoplasm. The enzyme catalyses a fatty acyl-[ACP] + phosphate = an acyl phosphate + holo-[ACP]. It functions in the pathway lipid metabolism; phospholipid metabolism. Functionally, catalyzes the reversible formation of acyl-phosphate (acyl-PO(4)) from acyl-[acyl-carrier-protein] (acyl-ACP). This enzyme utilizes acyl-ACP as fatty acyl donor, but not acyl-CoA. The polypeptide is Phosphate acyltransferase (Bartonella henselae (strain ATCC 49882 / DSM 28221 / CCUG 30454 / Houston 1) (Rochalimaea henselae)).